The chain runs to 164 residues: Lectin (164 aa).

Residues 1 to 15 form the signal peptide; sequence TVATILTILASTCMA. In terms of domain architecture, Bulb-type lectin spans 16–125; that stretch reads RNVLVNNEGL…DIWSTGTYRK (110 aa). C44 and C68 form a disulfide bridge.

In terms of assembly, homotetramer. Not glycosylated.

In terms of biological role, mannose-specific lectin. Induces a Th1-type immune response in vitro. Causes a 4-fold increase in the proliferation of murine thymocytes and a significant increase in the production of nitric oxide at 24 hours in a macrophage cell line. Stimulates the production of the pro-inflammatory cytokines TNF and IL12 by rat peritoneal macrophages in a dose-dependent manner and of the cytokines IFNG and IL2 in murine thymocytes. Has hemagglutination activity towards rabbit erythrocytes. This chain is Lectin, found in Allium cepa (Onion).